We begin with the raw amino-acid sequence, 85 residues long: MAHKKAGSSSKNGRDSNPQYLGVKRYGGEDVNAGEIIVRQRGTKFHPGRNVGRGKDDTLFALSAGSVAFGQRRGRKVVDIVPAAE.

A disordered region spans residues Met-1–Arg-25. Over residues Gly-7–Gln-19 the composition is skewed to polar residues.

It belongs to the bacterial ribosomal protein bL27 family.

This is Large ribosomal subunit protein bL27 from Micrococcus luteus (strain ATCC 4698 / DSM 20030 / JCM 1464 / CCM 169 / CCUG 5858 / IAM 1056 / NBRC 3333 / NCIMB 9278 / NCTC 2665 / VKM Ac-2230) (Micrococcus lysodeikticus).